Reading from the N-terminus, the 430-residue chain is Peptidoglycan DD-endopeptidase ShyA (430 aa).

The first 35 residues, 1–35 (MISKSIILRFSELSMRKKATLVGLPLLAVAAISSS), serve as a signal peptide directing secretion. Residues H297, D301, and H378 each contribute to the Zn(2+) site.

Belongs to the peptidase M23B family. It depends on Zn(2+) as a cofactor.

Its subcellular location is the periplasm. Its pathway is cell wall degradation; peptidoglycan degradation. Reduced activity in 0.5 mM EDTA and a complete loss of activity at higher EDTA concentrations. The effect of EDTA can be reversed by addition of 1 mM ZnCl(2). Conformational switching between open (catalytically active) and closed (catalytically inactive) conformation of this protein is suggested mechanism of its regulation. The signal or inducer of the conformational shift to the open form unmasking the active site is currently not understood. Its function is as follows. Cell wall peptidoglycan (PG) DD-endopeptidase essential for cell growth and elongation. Hydrolyzes peptide cross-links which covalently connect adjacent PG strands probably to allow insertion of new glycans and thus cell wall expansion. Degrades purified whole PG sacculi in vitro. Releases predominantly short glycan chains from the PG. Cleaves D,D cross-linked muropeptides specifically preferring dimeric tetrapeptide-tetrapeptide (D44) substrates and has only little activity on dimeric tetrapeptide-pentapeptide (D45) substrates. Also converts more than 50% of tetrapeptide-tripeptide (D43) to product as well as more than 50% of D43M, which contains D-Met instead of D-Ala in the fourth position of the acceptor moiety. Cleaves the D,D bond between diaminopimelic acid (DAP) and D-Ala of the PG substrate in vitro. No cleavage of L,D bond connecting two DAP moieties. The chain is Peptidoglycan DD-endopeptidase ShyA from Vibrio cholerae serotype O1 (strain ATCC 39315 / El Tor Inaba N16961).